Consider the following 153-residue polypeptide: Ribosome maturation factor RimP (153 aa).

Belongs to the RimP family.

It is found in the cytoplasm. Required for maturation of 30S ribosomal subunits. The protein is Ribosome maturation factor RimP of Psychromonas ingrahamii (strain DSM 17664 / CCUG 51855 / 37).